Here is a 512-residue protein sequence, read N- to C-terminus: MQPTDSKTSTSDTTEQPNETQTITIPPSKKKSKPSSKTRRRLKDAEPLPFAIDGLSHDGRGVAVYGNGFVEADGHITDKHGKKIFVSFALPGESALVKITNSRTSFEEGDAVNITANPNPERVVPPCPHFGVCGGCNLQHWQPEAQINFKQSVLAEMLVHQANVAPDHWLEPVVGDRLGYRTKARLGVRYVAKKETALVGFRERSSNFLAELNECHILDPRIGFEIENLKTLISTLESRNKIAQLELAMGEYLPELPDGDQPVALIVRNLEPLSDADIDKLKVFFAARNWQLYLQPKGADSIQRIALTAADDLSEQFGRLYYQLPEYDLTFEFIPTDFTQVNLSVNRQMTKLACDLLDLKAGERVLDLFSGLGNFSLPLARLVGETGSVVGVEGSEAMTIRAADNARRNGINNTEFYSQDLTHDCTDKPWANQGFDALLIDPPRSGAWEIMQYLPKFNAERIVYVSCNPATLARDTKALLEQGYRLTHAGVMDMFCHTGHVESIARFEKVSA.

A compositionally biased stretch (low complexity) spans 1–14 (MQPTDSKTSTSDTT). Residues 1 to 45 (MQPTDSKTSTSDTTEQPNETQTITIPPSKKKSKPSSKTRRRLKDA) are disordered. Over residues 15-25 (EQPNETQTITI) the composition is skewed to polar residues. The span at 28 to 42 (SKKKSKPSSKTRRRL) shows a compositional bias: basic residues. The TRAM domain maps to 41–113 (RLKDAEPLPF…TSFEEGDAVN (73 aa)). The [4Fe-4S] cluster site is built by Cys127, Cys133, Cys136, and Cys215. S-adenosyl-L-methionine is bound by residues Gln340, Phe369, Asn374, Glu393, Asp420, and Asp441. The active-site Nucleophile is the Cys467.

Belongs to the class I-like SAM-binding methyltransferase superfamily. RNA M5U methyltransferase family. RlmD subfamily.

It carries out the reaction uridine(1939) in 23S rRNA + S-adenosyl-L-methionine = 5-methyluridine(1939) in 23S rRNA + S-adenosyl-L-homocysteine + H(+). Catalyzes the formation of 5-methyl-uridine at position 1939 (m5U1939) in 23S rRNA. This Psychrobacter arcticus (strain DSM 17307 / VKM B-2377 / 273-4) protein is 23S rRNA (uracil(1939)-C(5))-methyltransferase RlmD.